The chain runs to 420 residues: MDRIRIRGGHPLAGEIAIGGAKNAALPVMACGLLTDDRLVLNNVPRLADIGTMKALIEQHGIAVERLDPLGRILSLGGQITNTEAPYDIVRKMRASVLVLGPLLARCGEARVSLPGGCAIGTRPVDMHLKGLEQMGAVITLESGYIDARVQGRLRGADIVLPMPSVGATENLLMAASLADGITTLRNAAREPEIEDLAHCLISMGAKIEGIGTGELRIEGVKHLHGAEHSIIPDRIETGSYACAAAITGGRLLLRNARLDHLGAVARTLREAGVEIEEQDSGLLVSRRNGLHGVDVMTEPYPGFPTDMQAQYMVLMSVAEGASMVTETIFENRFMHVPELNRMGARINVHGASAIVRGVSQLSGAPVMATDLRASLSLILAGLAAEGETIVNRVYHLDRGYESVAEKLSACGADIERISG.

Position 22–23 (22–23 (KN)) interacts with phosphoenolpyruvate. Arginine 94 is a UDP-N-acetyl-alpha-D-glucosamine binding site. Cysteine 118 (proton donor) is an active-site residue. At cysteine 118 the chain carries 2-(S-cysteinyl)pyruvic acid O-phosphothioketal. Residues aspartate 307 and isoleucine 329 each coordinate UDP-N-acetyl-alpha-D-glucosamine.

It belongs to the EPSP synthase family. MurA subfamily.

The protein resides in the cytoplasm. The catalysed reaction is phosphoenolpyruvate + UDP-N-acetyl-alpha-D-glucosamine = UDP-N-acetyl-3-O-(1-carboxyvinyl)-alpha-D-glucosamine + phosphate. It functions in the pathway cell wall biogenesis; peptidoglycan biosynthesis. Its function is as follows. Cell wall formation. Adds enolpyruvyl to UDP-N-acetylglucosamine. The sequence is that of UDP-N-acetylglucosamine 1-carboxyvinyltransferase from Granulibacter bethesdensis (strain ATCC BAA-1260 / CGDNIH1).